The sequence spans 300 residues: Hemagglutinin 1 (300 aa).

The helical transmembrane segment at 200–221 (FIFATVVFIFLQAGRVPEIIAD) threads the bilayer.

Its subcellular location is the cell membrane. In terms of biological role, induces agglutination of neuraminidase-treated erythrocytes. In Eikenella corrodens, this protein is Hemagglutinin 1 (hag1).